Consider the following 832-residue polypeptide: DNA polymerase I, thermostable (832 aa).

Positions 175 to 260 constitute a 5'-3' exonuclease domain; that stretch reads RPDQWADYRA…DLPLEVDFAK (86 aa). The interval 410-832 is polymerase; it reads ERLFANLWGR…IGEDWLSAKE (423 aa).

It belongs to the DNA polymerase type-A family.

It catalyses the reaction DNA(n) + a 2'-deoxyribonucleoside 5'-triphosphate = DNA(n+1) + diphosphate. In addition to polymerase activity, this DNA polymerase exhibits 5'-3' exonuclease activity. Unlikely to have 3'-5' exonuclease activity due to absence of a 3'-5' exonuclease domain. This is DNA polymerase I, thermostable (polA) from Thermus aquaticus.